Here is a 226-residue protein sequence, read N- to C-terminus: MEALKKMAGVTAAQYVKDGMIVGLGTGSTAYFFVEEIGRRVNEEGLQVVGVTTSSATTKQAESLGIPLKAVDEIDEIDLTVDGADEVDKEFNGIKGGGAALLMEKIVATPTKEYIWVVDESKMVEKLGAFKLPVEVVQYGAERLFRVFEKAGYNPSFRMKEDQKLITDMGNFIIDLDLKVIEKPFEFAEMLDKTVGVVEHGLFNGMVHKVIVAGKDGVKVLEAPSK.

Residues 26–29 (TGST), 82–85 (DGAD), and 95–98 (KGGG) contribute to the substrate site. The Proton acceptor role is filled by E104. K122 contacts substrate.

It belongs to the ribose 5-phosphate isomerase family. As to quaternary structure, homodimer.

The enzyme catalyses aldehydo-D-ribose 5-phosphate = D-ribulose 5-phosphate. It participates in carbohydrate degradation; pentose phosphate pathway; D-ribose 5-phosphate from D-ribulose 5-phosphate (non-oxidative stage): step 1/1. Functionally, catalyzes the reversible conversion of ribose-5-phosphate to ribulose 5-phosphate. The polypeptide is Ribose-5-phosphate isomerase A (Streptococcus uberis (strain ATCC BAA-854 / 0140J)).